A 363-amino-acid polypeptide reads, in one-letter code: Chorismate synthase (363 aa).

NADP(+) is bound by residues Arg48 and Arg54. Residues 125 to 127 (RSS), 237 to 238 (NA), Gly277, 292 to 296 (KPTSS), and Arg318 each bind FMN.

The protein belongs to the chorismate synthase family. Homotetramer. FMNH2 serves as cofactor.

It catalyses the reaction 5-O-(1-carboxyvinyl)-3-phosphoshikimate = chorismate + phosphate. Its pathway is metabolic intermediate biosynthesis; chorismate biosynthesis; chorismate from D-erythrose 4-phosphate and phosphoenolpyruvate: step 7/7. Catalyzes the anti-1,4-elimination of the C-3 phosphate and the C-6 proR hydrogen from 5-enolpyruvylshikimate-3-phosphate (EPSP) to yield chorismate, which is the branch point compound that serves as the starting substrate for the three terminal pathways of aromatic amino acid biosynthesis. This reaction introduces a second double bond into the aromatic ring system. The sequence is that of Chorismate synthase from Ectopseudomonas mendocina (strain ymp) (Pseudomonas mendocina).